Reading from the N-terminus, the 337-residue chain is tRNA N6-adenosine threonylcarbamoyltransferase (337 aa).

Fe cation contacts are provided by His111 and His115. Substrate is bound by residues 134–138, Asp167, Gly180, and Asn272; that span reads LVSGG. Asp300 provides a ligand contact to Fe cation.

The protein belongs to the KAE1 / TsaD family. Requires Fe(2+) as cofactor.

It localises to the cytoplasm. The catalysed reaction is L-threonylcarbamoyladenylate + adenosine(37) in tRNA = N(6)-L-threonylcarbamoyladenosine(37) in tRNA + AMP + H(+). In terms of biological role, required for the formation of a threonylcarbamoyl group on adenosine at position 37 (t(6)A37) in tRNAs that read codons beginning with adenine. Is involved in the transfer of the threonylcarbamoyl moiety of threonylcarbamoyl-AMP (TC-AMP) to the N6 group of A37, together with TsaE and TsaB. TsaD likely plays a direct catalytic role in this reaction. This Salmonella schwarzengrund (strain CVM19633) protein is tRNA N6-adenosine threonylcarbamoyltransferase.